We begin with the raw amino-acid sequence, 77 residues long: Small ribosomal subunit protein uS17 (77 aa).

It belongs to the universal ribosomal protein uS17 family. Part of the 30S ribosomal subunit.

One of the primary rRNA binding proteins, it binds specifically to the 5'-end of 16S ribosomal RNA. This chain is Small ribosomal subunit protein uS17, found in Anaplasma marginale (strain St. Maries).